A 470-amino-acid polypeptide reads, in one-letter code: Siroheme synthase (470 aa).

Residues 1 to 213 (MSDATDPGWF…GEHAAARQVL (213 aa)) are precorrin-2 dehydrogenase /sirohydrochlorin ferrochelatase. Residues 28–29 (GI) and 49–50 (PR) each bind NAD(+). The uroporphyrinogen-III C-methyltransferase stretch occupies residues 224–470 (GEVWLVGAGP…VVTPPPLSGT (247 aa)). P233 contributes to the S-adenosyl-L-methionine binding site. D256 (proton acceptor) is an active-site residue. Catalysis depends on K278, which acts as the Proton donor. S-adenosyl-L-methionine is bound by residues 309–311 (GGD), I314, 339–340 (TA), M392, and G421.

In the N-terminal section; belongs to the precorrin-2 dehydrogenase / sirohydrochlorin ferrochelatase family. This sequence in the C-terminal section; belongs to the precorrin methyltransferase family.

The enzyme catalyses uroporphyrinogen III + 2 S-adenosyl-L-methionine = precorrin-2 + 2 S-adenosyl-L-homocysteine + H(+). It catalyses the reaction precorrin-2 + NAD(+) = sirohydrochlorin + NADH + 2 H(+). The catalysed reaction is siroheme + 2 H(+) = sirohydrochlorin + Fe(2+). The protein operates within cofactor biosynthesis; adenosylcobalamin biosynthesis; precorrin-2 from uroporphyrinogen III: step 1/1. It functions in the pathway cofactor biosynthesis; adenosylcobalamin biosynthesis; sirohydrochlorin from precorrin-2: step 1/1. Its pathway is porphyrin-containing compound metabolism; siroheme biosynthesis; precorrin-2 from uroporphyrinogen III: step 1/1. It participates in porphyrin-containing compound metabolism; siroheme biosynthesis; siroheme from sirohydrochlorin: step 1/1. The protein operates within porphyrin-containing compound metabolism; siroheme biosynthesis; sirohydrochlorin from precorrin-2: step 1/1. Multifunctional enzyme that catalyzes the SAM-dependent methylations of uroporphyrinogen III at position C-2 and C-7 to form precorrin-2 via precorrin-1. Then it catalyzes the NAD-dependent ring dehydrogenation of precorrin-2 to yield sirohydrochlorin. Finally, it catalyzes the ferrochelation of sirohydrochlorin to yield siroheme. The protein is Siroheme synthase of Gluconacetobacter diazotrophicus (strain ATCC 49037 / DSM 5601 / CCUG 37298 / CIP 103539 / LMG 7603 / PAl5).